We begin with the raw amino-acid sequence, 439 residues long: MNSAKATSLLFQGFRKNCLRLNRISFASGLINRFTVPARTYADEKVFVRKKPHVNIGTIGHVDHGKTTLTAAITKCLSDLGQASFMDYSQIDKAPEEKARGITISSAHVEYETANRHYAHVDCPGHADYIKNMITGAATMDGAIIVVSATDGQMPQTREHLLLARQVGVKQIVVYINKVDMVEPDMIELVEMEMRELLSEYGFDGDNTPIVSGSALCALEGREPEIGLNSITKLMEAVDSYITLPERKTDVPFLMAIEDVFSISGRGTVVTGRVERGTLKKGAEIEIVGYGSHLKTTVTGIEMFKKQLDAAVAGDNCGLLLRSIKREQLKRGMIVAQPGTVAPHQKFKASFYILTKEEGGRRTGFVDKYRPQLYSRTSDVTVELTHPDPNDSDKMVMPGDNVEMICTLIHPIVIEKGQRFTVREGGSTVGTALVTELLD.

Residues Lys-51–Glu-246 enclose the tr-type G domain. A G1 region spans residues Gly-60–Thr-67. Gly-60–Thr-67 lines the GTP pocket. The tract at residues Gly-101–Ser-105 is G2. The interval Asp-122–Gly-125 is G3. Residues Asp-122–His-126 and Asn-177–Asp-180 contribute to the GTP site. A G4 region spans residues Asn-177 to Asp-180. Residues Ser-214–Leu-216 are G5.

This sequence belongs to the TRAFAC class translation factor GTPase superfamily. Classic translation factor GTPase family. EF-Tu/EF-1A subfamily.

It localises to the mitochondrion. In terms of biological role, this protein promotes the GTP-dependent binding of aminoacyl-tRNA to the A-site of ribosomes during protein biosynthesis. The chain is Elongation factor Tu, mitochondrial (tuf1) from Schizosaccharomyces pombe (strain 972 / ATCC 24843) (Fission yeast).